The sequence spans 150 residues: Large ribosomal subunit protein bL9 (150 aa).

Belongs to the bacterial ribosomal protein bL9 family.

Its function is as follows. Binds to the 23S rRNA. This is Large ribosomal subunit protein bL9 from Ralstonia pickettii (strain 12J).